Reading from the N-terminus, the 98-residue chain is NADH-ubiquinone oxidoreductase chain 4L (98 aa).

The next 3 membrane-spanning stretches (helical) occupy residues 1–21 (MTTM…GVYI), 29–49 (TLLC…LTLL), and 59–79 (FPLI…ALLV).

It belongs to the complex I subunit 4L family. As to quaternary structure, core subunit of respiratory chain NADH dehydrogenase (Complex I) which is composed of 45 different subunits.

It is found in the mitochondrion inner membrane. It catalyses the reaction a ubiquinone + NADH + 5 H(+)(in) = a ubiquinol + NAD(+) + 4 H(+)(out). Its function is as follows. Core subunit of the mitochondrial membrane respiratory chain NADH dehydrogenase (Complex I) which catalyzes electron transfer from NADH through the respiratory chain, using ubiquinone as an electron acceptor. Part of the enzyme membrane arm which is embedded in the lipid bilayer and involved in proton translocation. The polypeptide is NADH-ubiquinone oxidoreductase chain 4L (MT-ND4L) (Zaglossus bruijni (Western long-beaked echidna)).